Consider the following 129-residue polypeptide: Large ribosomal subunit protein bL19 (129 aa).

It belongs to the bacterial ribosomal protein bL19 family.

This protein is located at the 30S-50S ribosomal subunit interface and may play a role in the structure and function of the aminoacyl-tRNA binding site. The polypeptide is Large ribosomal subunit protein bL19 (Granulibacter bethesdensis (strain ATCC BAA-1260 / CGDNIH1)).